Here is an 82-residue protein sequence, read N- to C-terminus: Cytochrome b-c1 complex subunit 8 (82 aa).

Topologically, residues 2-39 are mitochondrial matrix; it reads GRQFGHLTRVRHVITYSLSPFEQRAFPHYFSKGIPNVL. Lys33 carries the post-translational modification N6-acetyllysine; alternate. Lys33 carries the post-translational modification N6-succinyllysine; alternate. The chain crosses the membrane as a helical span at residues 40–68; that stretch reads RRTRACILRVAPPFVAFYLVYTWGTQEFE. Over 69–82 the chain is Mitochondrial intermembrane; it reads KSKRKNPAAYENDR.

The protein belongs to the UQCRQ/QCR8 family. Component of the ubiquinol-cytochrome c oxidoreductase (cytochrome b-c1 complex, complex III, CIII), a multisubunit enzyme composed of 11 subunits. The complex is composed of 3 respiratory subunits cytochrome b, cytochrome c1 and Rieske protein UQCRFS1, 2 core protein subunits UQCRC1/QCR1 and UQCRC2/QCR2, and 6 low-molecular weight protein subunits UQCRH/QCR6, UQCRB/QCR7, UQCRQ/QCR8, UQCR10/QCR9, UQCR11/QCR10 and subunit 9, the cleavage product of Rieske protein UQCRFS1. The complex exists as an obligatory dimer and forms supercomplexes (SCs) in the inner mitochondrial membrane with NADH-ubiquinone oxidoreductase (complex I, CI) and cytochrome c oxidase (complex IV, CIV), resulting in different assemblies (supercomplex SCI(1)III(2)IV(1) and megacomplex MCI(2)III(2)IV(2)). Interacts with UQCC6.

It is found in the mitochondrion inner membrane. Functionally, component of the ubiquinol-cytochrome c oxidoreductase, a multisubunit transmembrane complex that is part of the mitochondrial electron transport chain which drives oxidative phosphorylation. The respiratory chain contains 3 multisubunit complexes succinate dehydrogenase (complex II, CII), ubiquinol-cytochrome c oxidoreductase (cytochrome b-c1 complex, complex III, CIII) and cytochrome c oxidase (complex IV, CIV), that cooperate to transfer electrons derived from NADH and succinate to molecular oxygen, creating an electrochemical gradient over the inner membrane that drives transmembrane transport and the ATP synthase. The cytochrome b-c1 complex catalyzes electron transfer from ubiquinol to cytochrome c, linking this redox reaction to translocation of protons across the mitochondrial inner membrane, with protons being carried across the membrane as hydrogens on the quinol. In the process called Q cycle, 2 protons are consumed from the matrix, 4 protons are released into the intermembrane space and 2 electrons are passed to cytochrome c. The protein is Cytochrome b-c1 complex subunit 8 (UQCRQ) of Bos taurus (Bovine).